The chain runs to 326 residues: N-acetyl-gamma-glutamyl-phosphate reductase (326 aa).

Cys155 is an active-site residue.

Belongs to the NAGSA dehydrogenase family. Type 1 subfamily.

It localises to the cytoplasm. The enzyme catalyses N-acetyl-L-glutamate 5-semialdehyde + phosphate + NADP(+) = N-acetyl-L-glutamyl 5-phosphate + NADPH + H(+). It participates in amino-acid biosynthesis; L-arginine biosynthesis; N(2)-acetyl-L-ornithine from L-glutamate: step 3/4. Functionally, catalyzes the NADPH-dependent reduction of N-acetyl-5-glutamyl phosphate to yield N-acetyl-L-glutamate 5-semialdehyde. The protein is N-acetyl-gamma-glutamyl-phosphate reductase of Shewanella frigidimarina (strain NCIMB 400).